Consider the following 134-residue polypeptide: Retinol-binding protein 2 (134 aa).

The all-trans-retinol site is built by Lys-41 and Gln-109.

This sequence belongs to the calycin superfamily. Fatty-acid binding protein (FABP) family. Higher expression in adult small intestine and to a much lesser extent in fetal kidney.

The protein resides in the cytoplasm. Intracellular transport of retinol. This chain is Retinol-binding protein 2 (RBP2), found in Homo sapiens (Human).